The following is a 415-amino-acid chain: NADH-quinone oxidoreductase subunit D (415 aa).

This sequence belongs to the complex I 49 kDa subunit family. As to quaternary structure, NDH-1 is composed of 14 different subunits. Subunits NuoB, C, D, E, F, and G constitute the peripheral sector of the complex.

Its subcellular location is the cell inner membrane. The catalysed reaction is a quinone + NADH + 5 H(+)(in) = a quinol + NAD(+) + 4 H(+)(out). Its function is as follows. NDH-1 shuttles electrons from NADH, via FMN and iron-sulfur (Fe-S) centers, to quinones in the respiratory chain. The immediate electron acceptor for the enzyme in this species is believed to be ubiquinone. Couples the redox reaction to proton translocation (for every two electrons transferred, four hydrogen ions are translocated across the cytoplasmic membrane), and thus conserves the redox energy in a proton gradient. This chain is NADH-quinone oxidoreductase subunit D, found in Myxococcus xanthus (strain DK1622).